The sequence spans 493 residues: Glycerol kinase (493 aa).

ADP is bound at residue Thr13. ATP-binding residues include Thr13, Thr14, and Ser15. Sn-glycerol 3-phosphate is bound at residue Thr13. Arg17 is an ADP binding site. Residues Arg83, Glu84, Tyr135, and Asp244 each contribute to the sn-glycerol 3-phosphate site. Glycerol is bound by residues Arg83, Glu84, Tyr135, Asp244, and Gln245. ADP-binding residues include Thr266 and Gly309. ATP-binding residues include Thr266, Gly309, Gln313, and Gly410. ADP-binding residues include Gly410 and Asn414.

Belongs to the FGGY kinase family.

It catalyses the reaction glycerol + ATP = sn-glycerol 3-phosphate + ADP + H(+). It participates in polyol metabolism; glycerol degradation via glycerol kinase pathway; sn-glycerol 3-phosphate from glycerol: step 1/1. Its activity is regulated as follows. Inhibited by fructose 1,6-bisphosphate (FBP). In terms of biological role, key enzyme in the regulation of glycerol uptake and metabolism. Catalyzes the phosphorylation of glycerol to yield sn-glycerol 3-phosphate. This Shewanella halifaxensis (strain HAW-EB4) protein is Glycerol kinase.